The following is a 333-amino-acid chain: Cap-specific mRNA (nucleoside-2'-O-)-methyltransferase (333 aa).

MRNA is bound at residue Y22. Q39, Y66, G68, G72, D95, R97, V116, and D138 together coordinate S-adenosyl-L-methionine. The interval 169–249 is binding to NPH-I; the sequence is PVASSLKWRC…NKIVRNKVVI (81 aa). Residue K175 is the For methyltransferase activity of the active site. Residues 177–180, D182, 205–207, and E233 each bind mRNA; these read RCPF and SAE. Positions 305-320 are enriched in basic and acidic residues; that stretch reads SHEPIQRKISSKDSMS. The tract at residues 305 to 333 is disordered; that stretch reads SHEPIQRKISSKDSMSKNRNSKRSVRGNK. The span at 323 to 333 shows a compositional bias: basic residues; the sequence is RNSKRSVRGNK.

It belongs to the class I-like SAM-binding methyltransferase superfamily. Poxvirus/kinetoplastid 2'-O-MTase family. Interacts with poly(A) polymerase catalytic subunit OPG063. Interacts with OPG109 and OPG123; these interactions might help linking transcription to capping and polyadenylation.

The protein localises to the virion. The enzyme catalyses a 5'-end (N(7)-methyl 5'-triphosphoguanosine)-ribonucleoside in mRNA + S-adenosyl-L-methionine = a 5'-end (N(7)-methyl 5'-triphosphoguanosine)-(2'-O-methyl-ribonucleoside) in mRNA + S-adenosyl-L-homocysteine + H(+). Its function is as follows. Displays methyltransferase, positive regulation of the poly(A) polymerase and transcription elongation activities. Involved in the modification of both mRNA ends and in intermediate and late gene positive transcription elongation. At the mRNAs 5' end, methylates the ribose 2' OH group of the first transcribed nucleotide, thereby producing a 2'-O-methylpurine cap. At the 3' end, functions as a processivity factor which stimulates the activity of the viral poly(A) polymerase OPG063 that creates mRNA's poly(A) tail. In the presence of OPG102, OPG063 does not dissociate from the RNA allowing tail elongation to around 250 adenylates. The sequence is that of Cap-specific mRNA (nucleoside-2'-O-)-methyltransferase (OPG102) from Cynomys gunnisoni (Gunnison's prairie dog).